Consider the following 969-residue polypeptide: GATOR2 complex protein Wdr59 (969 aa).

The disordered stretch occupies residues 1-24 (MPPTETLRPGERGTAGGPGAGAPE). WD repeat units follow at residues 127–167 (GHTR…KPAL), 172–211 (VCMS…CPTH), 215–255 (AHLN…RAEK), 258–303 (TTMS…DPIC), and 307–351 (GHTD…LKLC). Phosphothreonine is present on Thr373. The RWD domain occupies 435–538 (HEFSLLNTNM…RALVAAMKKK (104 aa)). The segment at 891–911 (ECRKCAKPKRTPKCEPCKRPV) adopts a C4-type zinc-finger fold. Cys892, Cys895, Cys904, Cys907, Cys917, Cys928, His933, His936, His939, Cys950, Cys953, Cys955, and Cys957 together coordinate Zn(2+). Residues 912-960 (LFCVLCRLPVKGAANACLACGHGGHIDHMMQWFEKHNVCATCGCKCLER) form an RING-type; atypical zinc finger.

Belongs to the WD repeat WDR59 family. As to quaternary structure, component of the GATOR complex consisting of mio, Nup44A/Seh1, Im11, Nplr3, Nplr2, Wdr24, Wdr59 and Sec13. Within the GATOR complex, probable component of the GATOR2 subcomplex which is likely composed of mio, Nup44A/Seh1, Wdr24, Wdr59 and Sec13. The GATOR2 complex associates with unmet in the absence of S-adenosyl-L-methionine; the mio-Wdr24-Nup44A subcomplex is essential and sufficient for this interaction while Wdr59 and Sec13 are dispensable. This association acts as a nutrient sensor to inhibit mTORC1 signaling in the absence of methionine.

The protein localises to the lysosome membrane. A component of the GATOR complex, which functions as a regulator of the amino acid-sensing branch of the mTORC1 signaling pathway. The two GATOR subcomplexes, GATOR1 and GATOR2, regulate the mTORC1 pathway in order to mediate metabolic homeostasis, female gametogenesis and the response to amino acid limitation and complete starvation. GATOR2 activates the mTORC1 signaling pathway through the inhibition of the GATOR1 subcomplex, controlling the switch to cell proliferation and growth under nutrient replete conditions and during female oocyte development. Acts as an atypical component of the GATOR2 subcomplex, which can either promote or inhibit mTORC1 signaling, depending on tissues: inhibits mTORC1 activity by preventing the activity of GATOR2 in the ovary and the eye imaginal disk brain, while it promotes mTORC1 activity in the fat body. The protein is GATOR2 complex protein Wdr59 of Drosophila melanogaster (Fruit fly).